We begin with the raw amino-acid sequence, 285 residues long: N(G),N(G)-dimethylarginine dimethylaminohydrolase 1 (285 aa).

Position 2 is an N-acetylalanine (A2). A substrate-binding site is contributed by L30. S33 is subject to Phosphoserine. 5 residues coordinate substrate: D73, E78, D79, R98, and R145. Residue H173 is the Proton donor of the active site. S-nitrosocysteine is present on C222. V268 contacts substrate. S-nitrosocysteine is present on C274. C274 serves as the catalytic Nucleophile. A Zn(2+)-binding site is contributed by C274.

Belongs to the DDAH family. Monomer. In terms of tissue distribution, detected in skeletal muscle, lung, heart, liver, kidney and brain (at protein level).

The catalysed reaction is N(omega),N(omega)-dimethyl-L-arginine + H2O = dimethylamine + L-citrulline. The enzyme catalyses N(omega)-methyl-L-arginine + H2O = L-citrulline + methylamine. With respect to regulation, inhibited by zinc ions. Functionally, hydrolyzes N(G),N(G)-dimethyl-L-arginine (ADMA) and N(G)-monomethyl-L-arginine (MMA) which act as inhibitors of NOS. Has therefore a role in the regulation of nitric oxide generation. This is N(G),N(G)-dimethylarginine dimethylaminohydrolase 1 (Ddah1) from Mus musculus (Mouse).